Reading from the N-terminus, the 279-residue chain is Shikimate dehydrogenase (NADP(+)) (279 aa).

Residues 19–21 (SFS) and Thr-66 contribute to the shikimate site. Lys-70 (proton acceptor) is an active-site residue. Glu-82 contacts NADP(+). Shikimate is bound by residues Asn-91 and Asp-106. Residues 130-134 (GSGGA) and Leu-222 each bind NADP(+). Tyr-224 contributes to the shikimate binding site. Gly-245 is a binding site for NADP(+).

It belongs to the shikimate dehydrogenase family. Homodimer.

The enzyme catalyses shikimate + NADP(+) = 3-dehydroshikimate + NADPH + H(+). It functions in the pathway metabolic intermediate biosynthesis; chorismate biosynthesis; chorismate from D-erythrose 4-phosphate and phosphoenolpyruvate: step 4/7. Its function is as follows. Involved in the biosynthesis of the chorismate, which leads to the biosynthesis of aromatic amino acids. Catalyzes the reversible NADPH linked reduction of 3-dehydroshikimate (DHSA) to yield shikimate (SA). The protein is Shikimate dehydrogenase (NADP(+)) of Methanococcus maripaludis (strain C6 / ATCC BAA-1332).